Here is a 281-residue protein sequence, read N- to C-terminus: Pantothenate synthetase (281 aa).

30–37 provides a ligand contact to ATP; that stretch reads MGYLHEGH. H37 (proton donor) is an active-site residue. A (R)-pantoate-binding site is contributed by Q61. Q61 provides a ligand contact to beta-alanine. ATP is bound at residue 147–150; that stretch reads GEKD. Q153 contacts (R)-pantoate. ATP is bound by residues I176 and 184–187; that span reads KSSR.

It belongs to the pantothenate synthetase family. In terms of assembly, homodimer.

It is found in the cytoplasm. It catalyses the reaction (R)-pantoate + beta-alanine + ATP = (R)-pantothenate + AMP + diphosphate + H(+). It participates in cofactor biosynthesis; (R)-pantothenate biosynthesis; (R)-pantothenate from (R)-pantoate and beta-alanine: step 1/1. Functionally, catalyzes the condensation of pantoate with beta-alanine in an ATP-dependent reaction via a pantoyl-adenylate intermediate. This is Pantothenate synthetase from Clostridium botulinum (strain ATCC 19397 / Type A).